The following is a 251-amino-acid chain: Transcriptional regulator CBF1 (251 aa).

Residues 1 to 169 form a disordered region; sequence MVKSHKRTLE…VERKRRESIN (169 aa). A compositionally biased stretch (basic and acidic residues) spans 7 to 28; it reads RTLEKDEEHQEKKKANKISKDD. Low complexity predominate over residues 40–56; it reads ASDSAHTDTATAAVAAV. The segment covering 67–76 has biased composition (polar residues); it reads TESSTNQTSA. The span at 77–105 shows a compositional bias: basic and acidic residues; the sequence is LDKDDKETKDNLNPREETQSSHQEIDIPK. Positions 107-116 are enriched in polar residues; it reads QLTNQQNLAD. Positions 117-126 are enriched in low complexity; that stretch reads QHQQYQYHQQ. A compositionally biased stretch (polar residues) spans 127–140; that stretch reads LAQTNFKTEPTNSA. Residues 144-167 show a composition bias toward basic and acidic residues; it reads HGSEEWHRQRRENHKEVERKRRES. One can recognise a bHLH domain in the interval 152–200; sequence QRRENHKEVERKRRESINTGIRELARLIPTTDTNKAQILQRAVEYIKRL. Positions 190 to 223 form a coiled coil; it reads LQRAVEYIKRLKENENNNIEKWTLEKLLTEQAVS.

It is found in the nucleus. Functionally, transcription factor that binds ribosomal protein gene promoters and rDNA locus with TBF1. Necessary for the expression of genes involved in assimilation of inorganic sulfate. Also required for the expression of respiratory genes and glycolytic genes. Does not bind to centromeres and is not necessary for efficient chromosome segregationas as does S.cerevisiae CBF1. This is Transcriptional regulator CBF1 (CBF1) from Candida albicans (strain SC5314 / ATCC MYA-2876) (Yeast).